We begin with the raw amino-acid sequence, 473 residues long: MAP kinase-activated protein kinase 5 (473 aa).

Positions 22 to 304 (INWTQKLGAG…IEGVLDHPWL (283 aa)) constitute a Protein kinase domain. ATP contacts are provided by residues 28–36 (LGAGISGPV) and Lys-51. Position 115 is a phosphoserine; by PKA (Ser-115). Catalysis depends on Asp-148, which acts as the Proton acceptor. The residue at position 182 (Thr-182) is a Phosphothreonine; by MAPK11, MAPK14, MAPK4, MAPK6 and PKA. A phosphoserine mark is found at Ser-212 and Ser-354. Residues 409-440 (ENEDEKLNEVMQEAWKYNRECKLLRDTLQSFS) adopt a coiled-coil conformation.

It belongs to the protein kinase superfamily. CAMK Ser/Thr protein kinase family. As to quaternary structure, interacts with ERK3/MAPK6 and ERK4/MAPK4 (via FRIEDE motif); the interaction is direct. Interacts with YWHAE; the interaction prevents phosphorylation of HSP27/HSPB1 leading to disrupt F-actin polymerization. Interacts with SQSTM1. Phosphorylated on Thr-182 ERK3/MAPK6 or ERK4/MAPK4; which is the regulatory phosphorylation site and is located on the T-loop/loop 12, leading to activation. Phosphorylation at Thr-182 by p38-alpha/MAPK14, p38-beta/MAPK11 is subject to debate. Phosphorylated at Ser-115 by PKA/PRKACA, leading to localization to the cytoplasm. Autophosphorylated. As to expression, expressed ubiquitously.

The protein localises to the cytoplasm. The protein resides in the nucleus. It carries out the reaction L-seryl-[protein] + ATP = O-phospho-L-seryl-[protein] + ADP + H(+). The enzyme catalyses L-threonyl-[protein] + ATP = O-phospho-L-threonyl-[protein] + ADP + H(+). Activated following phosphorylation at Thr-182 by p38-alpha/MAPK14, p38-beta/MAPK11, ERK2/MAPK1, ERK3/MAPK6, and ERK4/MAPK4. Activated by stress-related extracellular stimuli; such as H(2)O(2), arsenite, anisomycin TNF alpha and also PMA and the calcium ionophore A23187; but to a lesser extent. In vitro, activated by SQSTM1. Inhibited by diterpenoid alkaloid noroxoaconitine. In terms of biological role, tumor suppressor serine/threonine-protein kinase involved in mTORC1 signaling and post-transcriptional regulation. Phosphorylates FOXO3, ERK3/MAPK6, ERK4/MAPK4, HSP27/HSPB1, p53/TP53 and RHEB. Acts as a tumor suppressor by mediating Ras-induced senescence and phosphorylating p53/TP53. Involved in post-transcriptional regulation of MYC by mediating phosphorylation of FOXO3: phosphorylation of FOXO3 leads to promote nuclear localization of FOXO3, enabling expression of miR-34b and miR-34c, 2 post-transcriptional regulators of MYC that bind to the 3'UTR of MYC transcript and prevent MYC translation. Acts as a negative regulator of mTORC1 signaling by mediating phosphorylation and inhibition of RHEB. Part of the atypical MAPK signaling via its interaction with ERK3/MAPK6 or ERK4/MAPK4: the precise role of the complex formed with ERK3/MAPK6 or ERK4/MAPK4 is still unclear, but the complex follows a complex set of phosphorylation events: upon interaction with atypical MAPK (ERK3/MAPK6 or ERK4/MAPK4), ERK3/MAPK6 (or ERK4/MAPK4) is phosphorylated and then mediates phosphorylation and activation of MAPKAPK5, which in turn phosphorylates ERK3/MAPK6 (or ERK4/MAPK4). Mediates phosphorylation of HSP27/HSPB1 in response to PKA/PRKACA stimulation, inducing F-actin rearrangement. The polypeptide is MAP kinase-activated protein kinase 5 (MAPKAPK5) (Homo sapiens (Human)).